A 362-amino-acid chain; its full sequence is Peptide chain release factor 1 (362 aa).

Gln-237 carries the N5-methylglutamine modification.

Belongs to the prokaryotic/mitochondrial release factor family. Methylated by PrmC. Methylation increases the termination efficiency of RF1.

Its subcellular location is the cytoplasm. Its function is as follows. Peptide chain release factor 1 directs the termination of translation in response to the peptide chain termination codons UAG and UAA. This Vibrio campbellii (strain ATCC BAA-1116) protein is Peptide chain release factor 1.